Here is an 867-residue protein sequence, read N- to C-terminus: MVDISLKILSNEMKISIKELIKTLSEISISKTENDCISITEKKNLLKYLESKKKPFLNTFILQRKTRSTLNVFTPGGKNKSVQIEIRKKRMYLKNNKSELEPLLKNKNLLQNKEKNNLKSLKNTISKAKESQKNIDILEESKANINFKNLNKLTKSNVFNKNEKNKSLKKNINFNNHSFYSKKTIKNNTENQKLYKEEKKDYHLTTFIHNRNTEDNRDREIEKNKRNFHRNIKNYRQKKNNKQNNQIKSKKDEVRISKNRKNVKQKNKSILLQQVFKKPESVINRDVVINGAITVCDLANKMAIKSSEVIKNMMNMGIIGTINHVLDQDTAQLIAEEMGHKVILRRENELEELIMKDRDTGNNISLTRAPVVTIMGHVDHGKTSLLDYIRSTKVASSEAGGITQNIGAYHVTTDFGSVTFLDTPGHSAFTGMRSRGVKITDIVVLVVAADDGVKPQTIEAIQHAKEANVPIIVAINKIDKVDSNIDQIKNDLTKYNILSEEWGGENIFVLISAKTGKGIDNLLNAILLQSEILELKAISTGMAEGVVIESFLDKGRGPIATVLVQKGNLKKGDIILCGFEYGRIKVLRNENGKTLKHAGPSMPVEVLGLSKVPFSGEKVTVVRDEKKAKEVASYRKNKSREIKLANQNRSSLENMFKNIKKNDFSELKIIIKSDVQGSLEAISSALFKLSTNEVKVNIIGSGIGGITETDASLALASNAIILGFNVRADASAKKIIDLENLDLRYYSVIYDLLNEVKAAMTGLLSPQYKQNIIGLAEVRNIFKSPKFGLIAGCMVTEGIIKRNNPIRILRNNVVVYEGELESLRRFKEDINEIRNGMECGIGIKNYHDLNIGDVIEVFEVKEIKRIL.

Positions 367–534 (TRAPVVTIMG…AILLQSEILE (168 aa)) constitute a tr-type G domain. The segment at 376-383 (GHVDHGKT) is G1. 376–383 (GHVDHGKT) contacts GTP. The interval 401-405 (GITQN) is G2. The interval 422–425 (DTPG) is G3. GTP is bound by residues 422-426 (DTPGH) and 476-479 (NKID). The interval 476–479 (NKID) is G4. Residues 512-514 (SAK) form a G5 region.

Belongs to the TRAFAC class translation factor GTPase superfamily. Classic translation factor GTPase family. IF-2 subfamily.

Its subcellular location is the cytoplasm. In terms of biological role, one of the essential components for the initiation of protein synthesis. Protects formylmethionyl-tRNA from spontaneous hydrolysis and promotes its binding to the 30S ribosomal subunits. Also involved in the hydrolysis of GTP during the formation of the 70S ribosomal complex. In Buchnera aphidicola subsp. Schizaphis graminum (strain Sg), this protein is Translation initiation factor IF-2.